The primary structure comprises 622 residues: Iron transport multicopper oxidase FET3 (622 aa).

Positions 1–22 (MRPKLLSVEAALFLALPELARA) are cleaved as a signal peptide. Residues 23–553 (ATRKFDFEIG…NTLPPGFTPR (531 aa)) are Extracellular-facing. Plastocyanin-like domains follow at residues 31 to 146 (IGWV…VHDK), 156 to 303 (EEVV…VYDK), and 363 to 498 (YTEA…VEDP). A glycan (N-linked (GlcNAc...) asparagine) is linked at N76. 2 residues coordinate Cu cation: H82 and H84. N89 and N114 each carry an N-linked (GlcNAc...) asparagine glycan. Residues H126 and H128 each contribute to the Cu cation site. 3 N-linked (GlcNAc...) asparagine glycosylation sites follow: N196, N200, and N294. H414, H417, and H419 together coordinate Cu cation. N440 carries N-linked (GlcNAc...) asparagine glycosylation. Cu cation-binding residues include H479, C480, H481, and H485. The helical transmembrane segment at 554-574 (GIVALVFSCICGILGVAVVAW) threads the bilayer. Over 575-622 (YGFSAPVGSTSAGALSAGLVENDSGDVHSAQKGPQETVVSPTGDARSH) the chain is Cytoplasmic. The disordered stretch occupies residues 597 to 622 (DSGDVHSAQKGPQETVVSPTGDARSH).

This sequence belongs to the multicopper oxidase family.

It is found in the cell membrane. In terms of biological role, cell surface ferroxidase; part of the reductive iron assimilatory system (RIA), a siderophore-independent iron acquisition process. Required to oxidize Fe(2+) and release it from the transporter. Seems not to be involved in virulence. In Gibberella zeae (strain ATCC MYA-4620 / CBS 123657 / FGSC 9075 / NRRL 31084 / PH-1) (Wheat head blight fungus), this protein is Iron transport multicopper oxidase FET3.